The following is a 4128-amino-acid chain: DNA-dependent protein kinase catalytic subunit (4128 aa).

The residue at position 117 (Lys-117) is an N6-acetyllysine. The HEAT 1 repeat unit spans residues 288 to 323 (DNYVSLFEVLLKWCAHTNVELKKAALSALESFLKQV). 2 positions are modified to phosphoserine: Ser-511 and Ser-687. Residue Lys-828 is modified to N6-acetyllysine. Phosphoserine occurs at positions 841 and 893. The HEAT 2 repeat unit spans residues 1004–1040 (QDTVALLEAILDGIVDPVDSTLRDFCGRCIREFLKWS). Ser-1065 bears the Phosphoserine mark. The residue at position 1209 (Lys-1209) is an N6-acetyllysine. The interaction with C1D stretch occupies residues 1503–1538 (LDLSCKQLASGLLELAFAFGGLCERLVSLLLNPAVL). The tract at residues 1503–1538 (LDLSCKQLASGLLELAFAFGGLCERLVSLLLNPAVL) is leucine-zipper. The TPR 1 repeat unit spans residues 1723 to 1756 (PMQSREFPPGTPRFNNYVDCMKKFLDALELSQSP). Position 1970 is an N6-acetyllysine (Lys-1970). The segment at 2050–2073 (QSYSYSSQDPRPATGRFRRREQRD) is disordered. Ser-2056 bears the Phosphoserine; by autocatalysis mark. Lys-2259 is subject to N6-acetyllysine. A KIP-binding region spans residues 2436–3212 (LDIIYKMMPK…DNSMNVDQDG (777 aa)). Thr-2535 bears the Phosphothreonine mark. Thr-2609 carries the phosphothreonine; by autocatalysis modification. Position 2612 is a phosphoserine; by autocatalysis (Ser-2612). A phosphothreonine; by autocatalysis mark is found at Thr-2638 and Thr-2647. Residues 2737–2765 (EKLSLMYARKGVAEQKREKEIKSELKMKQ) are may split the end of the DNA molecule, with the two strands separating around the region. The residue at position 2789 (Ser-2789) is a Phosphoserine. Positions 2906–3539 (PAKRVRGKAR…VYPFIISSES (634 aa)) constitute an FAT domain. 2 TPR repeats span residues 2920–2948 (VLRW…SEIG) and 2949–2982 (TKQI…QDWV). Residues 3200-3222 (LPEDNSMNVDQDGDPSDRMEVQE) are disordered. A Phosphoserine modification is found at Ser-3205. N6-acetyllysine occurs at positions 3241, 3260, 3621, 3638, and 3642. The PI3K/PI4K catalytic domain maps to 3722–4053 (FDERVTVMAS…ICYAKRKLAG (332 aa)). A G-loop region spans residues 3728–3734 (VMASLRR). Phosphoserine is present on residues Ser-3731 and Ser-3821. Positions 3919-3927 (GIGDRHLNN) are catalytic loop. The interval 3939 to 3964 (GIDFGHAFGSATQFLPVPELMPFRLT) is activation loop. Residue Ser-4026 is modified to Phosphoserine. Positions 4096–4128 (SGLSEETQVKCLMDQATDPNILGRTWEGWEPWM) constitute an FATC domain.

Belongs to the PI3/PI4-kinase family. DNA-PK is a heterotrimer of PRKDC and the Ku dimer (composed of XRCC6/Ku70 and XRCC5/Ku86). Formation of this complex may be promoted by interaction with ILF3. Component of the core long-range non-homologous end joining (NHEJ) complex (also named DNA-PK complex) composed of PRKDC, LIG4, XRCC4, XRCC6/Ku70, XRCC5/Ku86 and NHEJ1/XLF. Additional component of the NHEJ complex includes PAXX. Following autophosphorylation, PRKDC dissociates from DNA. Interacts with DNA-PKcs-interacting protein (KIP) with the region upstream the kinase domain. PRKDC alone also interacts with and phosphorylates DCLRE1C, thereby activating the latent endonuclease activity of this protein. Interacts with C1D. Interacts with TTI1 and TELO2. Interacts with CIB1. Interacts with SETX. Interacts with NR4A3; the DNA-dependent protein kinase complex DNA-PK phosphorylates and activates NR4A3 and prevents NR4A3 ubiquitination and degradation. Interacts with BRAT1. Part of the HDP-RNP complex composed of at least HEXIM1, PRKDC, XRCC5, XRCC6, paraspeckle proteins (SFPQ, NONO, PSPC1, RBM14, and MATR3) and NEAT1 RNA. Interacts with KAT5. Post-translationally, autophosphorylated at two clusters, the T2609 cluster and the S2056 cluster. Autophosphorylated on Ser-2056, Thr-2609, Thr-2638 and Thr-2647. Ser-2056 and Thr-2609 are DNA damage-inducible phosphorylation sites (inducible with ionizing radiation, IR) dephosphorylated by PPP5C. Autophosphorylation induces a conformational change that leads to remodeling of the DNA-PK complex, requisite for efficient end processing and DNA repair. Autophosphorylation in trans within DNA-PK complexes loaded on DNA ends leads to the dissociation of PRKDC from DNA and the transition into the short-range NHEJ complex. Autophosphorylation of the T2609 cluster is required for hematopoietic development and protein synthesis in erythrocytes precursors. S-nitrosylated by GAPDH. In terms of processing, polyubiquitinated by RNF144A, leading to proteasomal degradation.

The protein localises to the nucleus. It is found in the nucleolus. Its subcellular location is the cytoplasm. The protein resides in the cytosol. It carries out the reaction L-seryl-[protein] + ATP = O-phospho-L-seryl-[protein] + ADP + H(+). It catalyses the reaction L-threonyl-[protein] + ATP = O-phospho-L-threonyl-[protein] + ADP + H(+). Its activity is regulated as follows. Activity seems to be attenuated by autophosphorylation. Binding to the SL1 region of U3 small nucleolar RNA promotes auto-phosphorylation activity. Inhibited by wortmannin. Functionally, serine/threonine-protein kinase that acts as a molecular sensor for DNA damage. Involved in DNA non-homologous end joining (NHEJ) required for double-strand break (DSB) repair and V(D)J recombination. Must be bound to DNA to express its catalytic properties. Promotes processing of hairpin DNA structures in V(D)J recombination by activation of the hairpin endonuclease artemis (DCLRE1C). Recruited by XRCC5 and XRCC6 to DNA ends and is required to (1) protect and align broken ends of DNA, thereby preventing their degradation, (2) and sequester the DSB for repair by NHEJ. Acts as a scaffold protein to aid the localization of DNA repair proteins to the site of damage. The assembly of the DNA-PK complex at DNA ends is also required for the NHEJ ligation step. Found at the ends of chromosomes, suggesting a further role in the maintenance of telomeric stability and the prevention of chromosomal end fusion. Also involved in modulation of transcription. As part of the DNA-PK complex, involved in the early steps of ribosome assembly by promoting the processing of precursor rRNA into mature 18S rRNA in the small-subunit processome. Binding to U3 small nucleolar RNA, recruits PRKDC and XRCC5/Ku86 to the small-subunit processome. Recognizes the substrate consensus sequence [ST]-Q. Phosphorylates 'Ser-139' of histone variant H2AX, thereby regulating DNA damage response mechanism. Phosphorylates ASF1A, DCLRE1C, c-Abl/ABL1, histone H1, HSPCA, c-jun/JUN, p53/TP53, PARP1, POU2F1, DHX9, FH, SRF, NHEJ1/XLF, XRCC1, XRCC4, XRCC5, XRCC6, WRN, MYC and RFA2. Can phosphorylate C1D not only in the presence of linear DNA but also in the presence of supercoiled DNA. Ability to phosphorylate p53/TP53 in the presence of supercoiled DNA is dependent on C1D. Acts as a regulator of the phosphatidylinositol 3-kinase/protein kinase B signal transduction by mediating phosphorylation of 'Ser-473' of protein kinase B (PKB/AKT1, PKB/AKT2, PKB/AKT3), promoting their activation. Contributes to the determination of the circadian period length by antagonizing phosphorylation of CRY1 'Ser-588' and increasing CRY1 protein stability, most likely through an indirect mechanism. Plays a role in the regulation of DNA virus-mediated innate immune response by assembling into the HDP-RNP complex, a complex that serves as a platform for IRF3 phosphorylation and subsequent innate immune response activation through the cGAS-STING pathway. Also regulates the cGAS-STING pathway by catalyzing phosphorylation of CGAS, thereby impairing CGAS oligomerization and activation. Also regulates the cGAS-STING pathway by mediating phosphorylation of PARP1. The polypeptide is DNA-dependent protein kinase catalytic subunit (PRKDC) (Homo sapiens (Human)).